The chain runs to 377 residues: Peroxisomal membrane protein PEX14 (377 aa).

The segment covering 1 to 20 has biased composition (low complexity); it reads MASSEQAEQPSQPSSSPGSE. Residues 1–23 form a disordered region; the sequence is MASSEQAEQPSQPSSSPGSENVV. Ala2 bears the N-acetylalanine mark. Residues 2–108 lie on the Peroxisomal side of the membrane; it reads ASSEQAEQPS…CSPGSSRWRD (107 aa). Lys34 is subject to N6-acetyllysine. Residues 109–126 traverse the membrane as a helical segment; sequence YGALAIIMAGIAFGFHQL. Residues 127 to 377 lie on the Cytoplasmic side of the membrane; it reads YKKYLLPLIL…EGASNESERH (251 aa). The tract at residues 230-377 is disordered; the sequence is PPSPSAPKIP…EGASNESERH (148 aa). Position 232 is a phosphoserine (Ser232). 2 stretches are compositionally biased toward low complexity: residues 244 to 259 and 265 to 275; these read PVKS…VNHH and SPVSNESTSSS. Ser282 and Ser335 each carry phosphoserine. A compositionally biased stretch (acidic residues) spans 323-342; the sequence is KEEEEEEEEEDVSHVDEEDV. Residues 360 to 377 are compositionally biased toward basic and acidic residues; sequence QVDKLRRPEGASNESERH.

This sequence belongs to the peroxin-14 family. As to quaternary structure, interacts with PEX13; forming the PEX13-PEX14 docking complex. Interacts with PEX5 (via WxxxF/Y motifs). Interacts with PEX19. Interacts with tubulin.

The protein resides in the peroxisome membrane. Component of the PEX13-PEX14 docking complex, a translocon channel that specifically mediates the import of peroxisomal cargo proteins bound to PEX5 receptor. The PEX13-PEX14 docking complex forms a large import pore which can be opened to a diameter of about 9 nm. Mechanistically, PEX5 receptor along with cargo proteins associates with the PEX14 subunit of the PEX13-PEX14 docking complex in the cytosol, leading to the insertion of the receptor into the organelle membrane with the concomitant translocation of the cargo into the peroxisome matrix. Plays a key role for peroxisome movement through a direct interaction with tubulin. This is Peroxisomal membrane protein PEX14 from Cricetulus longicaudatus (Long-tailed dwarf hamster).